Here is a 635-residue protein sequence, read N- to C-terminus: Chaperone protein HtpG (635 aa).

Positions 1 to 337 are a; substrate-binding; that stretch reads MELKMHNVQE…SPDLPLNISR (337 aa). Residues 338–556 form a b region; it reads ETLQNNRVVE…EGAMDLRMER (219 aa). The tract at residues 557–635 is c; it reads FLREQKQLNY…LNNLLGKISV (79 aa).

This sequence belongs to the heat shock protein 90 family. Homodimer.

The protein resides in the cytoplasm. Molecular chaperone. Has ATPase activity. In Wolbachia pipientis wMel, this protein is Chaperone protein HtpG.